Consider the following 478-residue polypeptide: Flotillin-like protein 1 (478 aa).

Cysteine 35 is lipidated: S-palmitoyl cysteine. Positions 235–277 (ENQREAEVAEANSELAKKKAAWTMAAQVAELEAAKAVALREAE) form a coiled coil.

Belongs to the band 7/mec-2 family. Flotillin subfamily. In terms of processing, may be palmitoylated. Expressed in all plant organs. Primarily expressed in vascular tissues. No change in spatial expression in root upon inoculation. Expression limited to the nodule vascular tissue.

The protein resides in the cell membrane. It is found in the membrane. The protein localises to the caveola. Its function is as follows. May act as a scaffolding protein within caveolar membranes, functionally participating in formation of caveolae or caveolae-like vesicles. May be involved in nodule formation. This is Flotillin-like protein 1 (FLOT1) from Medicago truncatula (Barrel medic).